Consider the following 642-residue polypeptide: Threonine--tRNA ligase (642 aa).

The region spanning 1-61 (MPVITLPDGS…ETDAELSIIT (61 aa)) is the TGS domain. The segment at 243–534 (DHRKIGKQLD…LIEEYAGRFP (292 aa)) is catalytic. Zn(2+) contacts are provided by C334, H385, and H511.

This sequence belongs to the class-II aminoacyl-tRNA synthetase family. Homodimer. Zn(2+) is required as a cofactor.

Its subcellular location is the cytoplasm. The enzyme catalyses tRNA(Thr) + L-threonine + ATP = L-threonyl-tRNA(Thr) + AMP + diphosphate + H(+). Its function is as follows. Catalyzes the attachment of threonine to tRNA(Thr) in a two-step reaction: L-threonine is first activated by ATP to form Thr-AMP and then transferred to the acceptor end of tRNA(Thr). Also edits incorrectly charged L-seryl-tRNA(Thr). This Shewanella putrefaciens (strain CN-32 / ATCC BAA-453) protein is Threonine--tRNA ligase.